The primary structure comprises 348 residues: MNPTVLTIIISSMGLGTTLTFIGSHWLLVWMGLEINTLAIIPLMIRQHHPRAVEATTKYFITQATASALLLFASVTNAWTSGEWSLIEMLNPTSATLATAALALKIGLAPLHFWLPEVLQGLDLTTGLILATWQKLAPFAILLQLSPLLNSNLLLLFGVTSTIVGGWGGLNQTQLRKILAYSSIANLGWMITILHYSPSLTLLNLILYMFMTLTTFLLFKTFNSTKINSISSSTLKSPLMSVIALMTLLSLGGLPPLSGFMPKWLILQELTKQSLIIPATIMALMALLSLFFYLRLCYATTLTKAPGPINMASTWRTKSHQPTLILLTSASISIFMLPMTPLILMLMT.

A run of 10 helical transmembrane segments spans residues 3–23 (PTVL…TFIG), 25–45 (HWLL…PLMI), 59–79 (YFIT…TNAW), 95–115 (ATLA…HFWL), 149–171 (LNSN…GGLN), 178–198 (ILAY…HYSP), 199–219 (SLTL…FLLF), 242–262 (VIAL…GFMP), 274–294 (SLII…FFYL), and 324–344 (LILL…PLIL).

Belongs to the complex I subunit 2 family.

It is found in the mitochondrion inner membrane. It catalyses the reaction a ubiquinone + NADH + 5 H(+)(in) = a ubiquinol + NAD(+) + 4 H(+)(out). Its function is as follows. Core subunit of the mitochondrial membrane respiratory chain NADH dehydrogenase (Complex I) that is believed to belong to the minimal assembly required for catalysis. Complex I functions in the transfer of electrons from NADH to the respiratory chain. The immediate electron acceptor for the enzyme is believed to be ubiquinone. This is NADH-ubiquinone oxidoreductase chain 2 (MT-ND2) from Scyliorhinus canicula (Small-spotted catshark).